The sequence spans 450 residues: Phosphoglucosamine mutase (450 aa).

Serine 101 (phosphoserine intermediate) is an active-site residue. Mg(2+)-binding residues include serine 101, aspartate 241, aspartate 243, and aspartate 245. Position 101 is a phosphoserine (serine 101).

The protein belongs to the phosphohexose mutase family. Mg(2+) serves as cofactor. In terms of processing, activated by phosphorylation.

It carries out the reaction alpha-D-glucosamine 1-phosphate = D-glucosamine 6-phosphate. Functionally, catalyzes the conversion of glucosamine-6-phosphate to glucosamine-1-phosphate. This Listeria monocytogenes serotype 4b (strain F2365) protein is Phosphoglucosamine mutase.